The chain runs to 104 residues: A-type ATP synthase subunit F (104 aa).

The protein belongs to the V-ATPase F subunit family. As to quaternary structure, has multiple subunits with at least A(3), B(3), C, D, E, F, H, I and proteolipid K(x).

The protein resides in the cell membrane. In terms of biological role, component of the A-type ATP synthase that produces ATP from ADP in the presence of a proton gradient across the membrane. This is A-type ATP synthase subunit F from Thermoplasma volcanium (strain ATCC 51530 / DSM 4299 / JCM 9571 / NBRC 15438 / GSS1).